The chain runs to 234 residues: Phosphoribosylaminoimidazole-succinocarboxamide synthase (234 aa).

It belongs to the SAICAR synthetase family.

The catalysed reaction is 5-amino-1-(5-phospho-D-ribosyl)imidazole-4-carboxylate + L-aspartate + ATP = (2S)-2-[5-amino-1-(5-phospho-beta-D-ribosyl)imidazole-4-carboxamido]succinate + ADP + phosphate + 2 H(+). It functions in the pathway purine metabolism; IMP biosynthesis via de novo pathway; 5-amino-1-(5-phospho-D-ribosyl)imidazole-4-carboxamide from 5-amino-1-(5-phospho-D-ribosyl)imidazole-4-carboxylate: step 1/2. This chain is Phosphoribosylaminoimidazole-succinocarboxamide synthase, found in Clostridium botulinum (strain Loch Maree / Type A3).